Reading from the N-terminus, the 396-residue chain is Elongation factor Tu (396 aa).

Residues 10–206 (KPHVNIGTIG…AVDESVPDPV (197 aa)) enclose the tr-type G domain. Positions 19-26 (GHVDHGKT) are G1. 19–26 (GHVDHGKT) contacts GTP. Thr26 serves as a coordination point for Mg(2+). The interval 62–66 (GITIN) is G2. The G3 stretch occupies residues 83-86 (DAPG). Residues 83–87 (DAPGH) and 138–141 (NKSD) each bind GTP. Positions 138-141 (NKSD) are G4. The tract at residues 176-178 (SGL) is G5.

The protein belongs to the TRAFAC class translation factor GTPase superfamily. Classic translation factor GTPase family. EF-Tu/EF-1A subfamily. In terms of assembly, monomer.

The protein resides in the cytoplasm. It catalyses the reaction GTP + H2O = GDP + phosphate + H(+). Its function is as follows. GTP hydrolase that promotes the GTP-dependent binding of aminoacyl-tRNA to the A-site of ribosomes during protein biosynthesis. The sequence is that of Elongation factor Tu from Paenarthrobacter aurescens (strain TC1).